Here is a 1351-residue protein sequence, read N- to C-terminus: MFLIIFILPTTLAVIGDFNCTNSFINDYNKTIPRISEDVVDVSLGLGTYYVLNRVYLNTTLLFTGYFPKSGANFRDLALKGSKYLSTLWYKPPFLSDFNNGIFSKVKNTKLYVNNTLYSEFSTIVIGSVFVNTSYTIVVQPHNGILEITACQYTMCEYPHTVCKSKGSIRNESWHIDSSEPLCLFKKNFTYNVSADWLYFHFYQERGVFYAYYADVGMPTTFLFSLYLGTILSHYYVMPLTCKAISSNTDNETLEYWVTPLSRRQYLLNFDEHGVITNAVDCSSSFLSEIQCKTQSFAPNTGVYDLSGFTVKPVATVYRRIPNLPDCDIDNWLNNVSVPSPLNWERRIFSNCNFNLSTLLRLVHVDSFSCNNLDKSKIFGSCFNSITVDKFAIPNRRRDDLQLGSSGFLQSSNYKIDISSSSCQLYYSLPLVNVTINNFNPSSWNRRYGFGSFNVSSYDVVYSDHCFSVNSDFCPCADPSVVNSCVKSKPLSAICPAGTKYRHCDLDTTLYVNNWCRCSCLPDPISTYSPNTCPQKKVVVGIGEHCPGLGINEEKCGTQLNHSSCSCSPDAFLGWSFDSCISNNRCNIFSNFIFNGINSGTTCSNDLLYSNTEVSTGVCVNYDLYGITGQGIFKEVSAAYYNNWQNLLYDSNGNIIGFKDFLTNKTYTILPCYSGRVSAAFYQNSSSPALLYRNLKCSYVLNNISFISQPFYFDSYLGCVLNAVNLTSYSVSSCDLRMGSGFCIDYALPSSRRKRRGISSPYRFVTFEPFNVSFVNDSVETVGGLFEIQIPTNFTIAGHEEFIQTSSPKVTIDCSAFVCSNYAACHDLLSEYGTFCDNINSILNEVNDLLDITQLQVANALMQGVTLSSNLNTNLHSDVDNIDFKSLLGCLGSQCGSSSRSLLEDLLFNKVKLSDVGFVEAYNNCTGGSEIRDLLCVQSFNGIKVLPPILSETQISGYTTAATVAAMFPPWSAAAGVPFSLNVQYRINGLGVTMDVLNKNQKLIANAFNKALLSIQNGFTATNSALAKIQSVVNANAQALNSLLQQLFNKFGAISSSLQEILSRLDNLEAQVQIDRLINGRLTALNAYVSQQLSDITLIKAGASRAIEKVNECVKSQSPRINFCGNGNHILSLVQNAPYGLLFIHFSYKPTSFKTVLVSPGLCLSGDRGIAPKQGYFIKQNDSWMFTGSSYYYPEPISDKNVVFMNSCSVNFTKAPFIYLNNSIPNLSDFEAEFSLWFKNHTSIAPNLTFNSHINATFLDLYYEMNVIQESIKSLNSSFINLKEIGTYEMYVKWPWYIWLLIVILFIIFLMILFFICCCTGCGSACFSKCHNCCDEYGGHNDFVIKASHDD.

The N-terminal stretch at 1-12 (MFLIIFILPTTL) is a signal peptide. The Extracellular portion of the chain corresponds to 13–1295 (AVIGDFNCTN…GTYEMYVKWP (1283 aa)). Residues 14–294 (VIGDFNCTNS…SFLSEIQCKT (281 aa)) form the BetaCoV S1-NTD domain. Residues N19, N29, N58, N114, N132, N171, N188, N192, and N251 are each glycosylated (N-linked (GlcNAc...) asparagine; by host). Cystine bridges form between C20-C156, C151-C183, and C163-C242. Intrachain disulfides connect C282–C292 and C327–C352. Positions 325 to 605 (PDCDIDNWLN…GINSGTTCSN (281 aa)) constitute a BetaCoV S1-CTD domain. N-linked (GlcNAc...) asparagine; by host glycosylation is found at N335 and N355. Intrachain disulfides connect C370–C423 and C382–C603. N-linked (GlcNAc...) asparagine; by host glycosylation is found at N433, N454, N561, N664, N684, N703, N725, N771, N776, and N793. Fusion peptide stretches follow at residues 901–922 (SLLEDLLFNKVKLSDVGFVEAY) and 920–940 (EAYNNCTGGSEIRDLLCVQSF). An N-linked (GlcNAc...) asparagine; by host glycan is attached at N924. An intrachain disulfide couples C925 to C936. Positions 1001–1051 (QKLIANAFNKALLSIQNGFTATNSALAKIQSVVNANAQALNSLLQQLFNKF) are heptad repeat 1. The stretch at 1030–1074 (QSVVNANAQALNSLLQQLFNKFGAISSSLQEILSRLDNLEAQVQI) forms a coiled coil. N1181, N1211, N1221, N1226, N1240, N1247, N1255, and N1276 each carry an N-linked (GlcNAc...) asparagine; by host glycan. The heptad repeat 2 stretch occupies residues 1245-1284 (APNLTFNSHINATFLDLYYEMNVIQESIKSLNSSFINLKE). Residues 1257-1285 (TFLDLYYEMNVIQESIKSLNSSFINLKEI) are a coiled coil. The chain crosses the membrane as a helical span at residues 1296-1316 (WYIWLLIVILFIIFLMILFFI). At 1317-1351 (CCCTGCGSACFSKCHNCCDEYGGHNDFVIKASHDD) the chain is on the cytoplasmic side. Residues 1347 to 1351 (ASHDD) carry the KxHxx motif.

The protein belongs to the betacoronaviruses spike protein family. As to quaternary structure, homotrimer; each monomer consists of a S1 and a S2 subunit. The resulting peplomers protrude from the virus surface as spikes. Specific enzymatic cleavages in vivo yield mature proteins. The precursor is processed into S1 and S2 by host cell furin or another cellular protease to yield the mature S1 and S2 proteins. Additionally, a second cleavage leads to the release of a fusion peptide after viral attachment to host cell receptor. In terms of processing, the cytoplasmic Cys-rich domain is palmitoylated. Spike glycoprotein is digested within host endosomes.

The protein localises to the virion membrane. Its subcellular location is the host endoplasmic reticulum-Golgi intermediate compartment membrane. It localises to the host cell membrane. Functionally, attaches the virion to the cell membrane by interacting with host receptor, initiating the infection. In terms of biological role, mediates fusion of the virion and cellular membranes by acting as a class I viral fusion protein. Under the current model, the protein has at least three conformational states: pre-fusion native state, pre-hairpin intermediate state, and post-fusion hairpin state. During viral and target cell membrane fusion, the coiled coil regions (heptad repeats) assume a trimer-of-hairpins structure, positioning the fusion peptide in close proximity to the C-terminal region of the ectodomain. The formation of this structure appears to drive apposition and subsequent fusion of viral and target cell membranes. Its function is as follows. Acts as a viral fusion peptide which is unmasked following S2 cleavage occurring upon virus endocytosis. This is Spike glycoprotein from Human coronavirus HKU1 (isolate N2) (HCoV-HKU1).